Reading from the N-terminus, the 142-residue chain is MATFKLIVVSAEQHIFNGEVKGIQATGSEGELGILAGHLPLLTAIKPGIIKITLEDDTEEVIYISGGFLEVQPTIVTVLADVAIRGKELDRERILEAKRKAEQNIVSGAKDASYEMLVSKLSRELAKLRAYELTDRLTQRKR.

This sequence belongs to the ATPase epsilon chain family. F-type ATPases have 2 components, CF(1) - the catalytic core - and CF(0) - the membrane proton channel. CF(1) has five subunits: alpha(3), beta(3), gamma(1), delta(1), epsilon(1). CF(0) has three main subunits: a, b and c.

The protein resides in the cell inner membrane. Its function is as follows. Produces ATP from ADP in the presence of a proton gradient across the membrane. The polypeptide is ATP synthase epsilon chain (Histophilus somni (strain 2336) (Haemophilus somnus)).